Consider the following 340-residue polypeptide: Protein B17 (340 aa).

Belongs to the orthopoxvirus B17 protein family.

The protein is Protein B17 of Variola virus (isolate Human/India/Ind3/1967) (VARV).